The chain runs to 318 residues: D-alanine--D-alanine ligase B (318 aa).

The region spanning 116–311 is the ATP-grasp domain; sequence KQVWQSLGIP…FQQLVLAILA (196 aa). 142–197 serves as a coordination point for ATP; sequence STELGFPLIVKPAHEGSSIGMAKVNSTQELVAAWQDAAKYDSQVLVEQWIHGPEFT. 3 residues coordinate Mg(2+): D265, E278, and N280.

Belongs to the D-alanine--D-alanine ligase family. Mg(2+) serves as cofactor. It depends on Mn(2+) as a cofactor.

It localises to the cytoplasm. The enzyme catalyses 2 D-alanine + ATP = D-alanyl-D-alanine + ADP + phosphate + H(+). Its pathway is cell wall biogenesis; peptidoglycan biosynthesis. Functionally, cell wall formation. The protein is D-alanine--D-alanine ligase B of Pseudomonas putida (strain ATCC 47054 / DSM 6125 / CFBP 8728 / NCIMB 11950 / KT2440).